The primary structure comprises 197 residues: Protein U63 (197 aa).

Belongs to the herpesviridae UL92 family.

The polypeptide is Protein U63 (Elephas maximus (Indian elephant)).